Reading from the N-terminus, the 360-residue chain is Spore germination protein GerQB (360 aa).

The next 10 helical transmembrane spans lie at 11-31, 45-65, 84-104, 116-136, 142-162, 188-208, 220-240, 270-290, 300-320, and 331-351; these read SPYM…MLGF, ISTL…YQIL, IGGL…ATTL, FPSI…YYIV, VVAG…FTFF, MKGN…YPFI, YANL…LAFF, IIVS…LWGV, IKQK…SFFL, and TWTG…LWLI.

Belongs to the amino acid-polyamine-organocation (APC) superfamily. Spore germination protein (SGP) (TC 2.A.3.9) family.

It localises to the membrane. Its function is as follows. Required for the germination response to inosine. Has no role in L-alanine germination. The sequence is that of Spore germination protein GerQB (gerQB) from Bacillus cereus.